The primary structure comprises 304 residues: N-acetylmuramic acid 6-phosphate etherase (304 aa).

Residues 62 to 225 (IVQAFQNGGR…TTASMVMIGK (164 aa)) enclose the SIS domain. The Proton donor role is filled by Glu90. Glu121 is a catalytic residue.

It belongs to the GCKR-like family. MurNAc-6-P etherase subfamily. Homodimer.

It catalyses the reaction N-acetyl-D-muramate 6-phosphate + H2O = N-acetyl-D-glucosamine 6-phosphate + (R)-lactate. It functions in the pathway amino-sugar metabolism; 1,6-anhydro-N-acetylmuramate degradation. The protein operates within amino-sugar metabolism; N-acetylmuramate degradation. Its pathway is cell wall biogenesis; peptidoglycan recycling. Specifically catalyzes the cleavage of the D-lactyl ether substituent of MurNAc 6-phosphate, producing GlcNAc 6-phosphate and D-lactate. Together with AnmK, is also required for the utilization of anhydro-N-acetylmuramic acid (anhMurNAc) either imported from the medium or derived from its own cell wall murein, and thus plays a role in cell wall recycling. The protein is N-acetylmuramic acid 6-phosphate etherase of Actinobacillus pleuropneumoniae serotype 7 (strain AP76).